The following is a 301-amino-acid chain: MIMPTPFVSQLSPSLFTTLREQLEKKGFVISIPPHTVFQGRSSTVSCTVYQSGKIVVQGKGTQEFVEFFLEPEILHSFSIQNVQQDLRPRIGVDESGKGDFFGPLCTAGVYAPSIKSIESLYEITICDSKLISDAKIPSLARSIRSLCTCKVITLFPEKYNALYANFQNLNALLAWTHATIIDDLAPKPTGDVFAISDQFASSERVLLQAVRKKRADIELIQRHRAEQDVVVAAASILARDAFLSSMQTLESQYQVRLLKGASGKVKQQAKEILRDKGQPVLEKVCKTHFKTFYEVLGSTS.

Positions 88–301 constitute an RNase H type-2 domain; the sequence is RPRIGVDESG…TFYEVLGSTS (214 aa). A divalent metal cation-binding residues include aspartate 94, glutamate 95, and aspartate 198.

This sequence belongs to the RNase HII family. RnhC subfamily. Requires Mn(2+) as cofactor. Mg(2+) is required as a cofactor.

Its subcellular location is the cytoplasm. The catalysed reaction is Endonucleolytic cleavage to 5'-phosphomonoester.. Its function is as follows. Endonuclease that specifically degrades the RNA of RNA-DNA hybrids. In Chlamydia muridarum (strain MoPn / Nigg), this protein is Ribonuclease HIII (rnhC).